A 263-amino-acid polypeptide reads, in one-letter code: Insulin-like growth factor-binding protein 1 (263 aa).

A signal peptide spans 1–25 (MPEVLAVRAWPLLLSLAVQLGATVG). An IGFBP N-terminal domain is found at 28-109 (QPWRCAPCSA…TRGQGACMTT (82 aa)). Disulfide bonds link cysteine 32–cysteine 59, cysteine 35–cysteine 61, cysteine 43–cysteine 62, cysteine 50–cysteine 65, cysteine 73–cysteine 86, and cysteine 80–cysteine 106. The tract at residues 102-131 (GQGACMTTPSDEATDTKDTTSPENVSPESS) is disordered. 5 positions are modified to phosphoserine: serine 122, serine 127, serine 130, serine 148, and serine 160. A compositionally biased stretch (polar residues) spans 122 to 131 (SPENVSPESS). The residue at position 162 (tyrosine 162) is a Phosphotyrosine. The region spanning 177–255 (KEPCQRELYK…SVAVRGDPKC (79 aa)) is the Thyroglobulin type-1 domain. 3 disulfides stabilise this stretch: cysteine 180–cysteine 210, cysteine 221–cysteine 232, and cysteine 234–cysteine 255. Residue serine 246 is modified to Phosphoserine. The short motif at 250-252 (RGD) is the Cell attachment site element.

In terms of assembly, binds equally well IGF1 and IGF2. Interacts with integrin ITGA5:ITGB1. Interacts with VHL; this interaction inhibits HIF1A degradation.

Its subcellular location is the secreted. Multifunctional protein that plays a critical role in regulating the availability of IGFs such as IGF1 and IGF2 to their receptors and thereby regulates IGF-mediated cellular processes including cell migration, proliferation, differentiation or apoptosis in a cell-type specific manner. Also plays a positive role in cell migration by interacting with integrin ITGA5:ITGB1 through its RGD motif. Mechanistically, binding to integrins leads to activation of focal adhesion kinase/PTK2 and stimulation of the mitogen-activated protein kinase (MAPK) pathway. Regulates cardiomyocyte apoptosis by suppressing HIF-1alpha/HIF1A degradation through ubiquitination. The chain is Insulin-like growth factor-binding protein 1 (IGFBP1) from Bos taurus (Bovine).